Here is a 513-residue protein sequence, read N- to C-terminus: NADH-quinone oxidoreductase subunit N (513 aa).

A run of 14 helical transmembrane segments spans residues 20–40 (SVGFFIPEIYLSLLFMILIVV), 49–69 (STLLSVFSLVGLAGSLYFIYQ), 88–108 (FAIFFKYFFVLSGMLAVVITM), 117–137 (ISSMGEYYALVVAMVVGMMMM), 144–164 (LMIFLSMELVSFTAFILAGYF), 178–198 (LIYGAVSSGLMIYGFSLIYGV), 219–239 (FVMLFAALLVLAGFGYKIGAV), 260–280 (LSVASKAAGFALLMRFVYVAL), 295–315 (WFTLLVILAVASMIYGNVVAL), 323–343 (LLAYSSIAHAGYALLGVIVMD), 351–371 (LFYLLSYLLMNFGAFFVVVLI), 394–414 (GAALTVFLISLVGLPPTIGFI), 429–451 (IFMWLALIGILTSVISLYYYMLI), and 474–494 (LVAQLFMGALMLLTIYFGLFF).

Belongs to the complex I subunit 2 family. In terms of assembly, NDH-1 is composed of 14 different subunits. Subunits NuoA, H, J, K, L, M, N constitute the membrane sector of the complex.

It localises to the cell inner membrane. It catalyses the reaction a quinone + NADH + 5 H(+)(in) = a quinol + NAD(+) + 4 H(+)(out). Functionally, NDH-1 shuttles electrons from NADH, via FMN and iron-sulfur (Fe-S) centers, to quinones in the respiratory chain. The immediate electron acceptor for the enzyme in this species is believed to be a menaquinone. Couples the redox reaction to proton translocation (for every two electrons transferred, four hydrogen ions are translocated across the cytoplasmic membrane), and thus conserves the redox energy in a proton gradient. In Chlorobium chlorochromatii (strain CaD3), this protein is NADH-quinone oxidoreductase subunit N.